Here is a 480-residue protein sequence, read N- to C-terminus: Methylenetetrahydrofolate--tRNA-(uracil-5-)-methyltransferase TrmFO (480 aa).

15–20 (GGGLAG) contacts FAD.

This sequence belongs to the MnmG family. TrmFO subfamily. The cofactor is FAD.

It localises to the cytoplasm. The catalysed reaction is uridine(54) in tRNA + (6R)-5,10-methylene-5,6,7,8-tetrahydrofolate + NADH + H(+) = 5-methyluridine(54) in tRNA + (6S)-5,6,7,8-tetrahydrofolate + NAD(+). It catalyses the reaction uridine(54) in tRNA + (6R)-5,10-methylene-5,6,7,8-tetrahydrofolate + NADPH + H(+) = 5-methyluridine(54) in tRNA + (6S)-5,6,7,8-tetrahydrofolate + NADP(+). In terms of biological role, catalyzes the folate-dependent formation of 5-methyl-uridine at position 54 (M-5-U54) in all tRNAs. This is Methylenetetrahydrofolate--tRNA-(uracil-5-)-methyltransferase TrmFO from Caulobacter sp. (strain K31).